The primary structure comprises 341 residues: Ketol-acid reductoisomerase (NADP(+)) (341 aa).

Residues Met-1 to Thr-182 form the KARI N-terminal Rossmann domain. Residues Tyr-25–Gln-28, Lys-48, Ser-51, Ser-53, and Asp-83–Gln-86 contribute to the NADP(+) site. The active site involves His-108. Gly-134 is an NADP(+) binding site. Residues Thr-183–Gln-328 form the KARI C-terminal knotted domain. Residues Asp-191, Glu-195, Glu-227, and Glu-231 each coordinate Mg(2+). Ser-252 lines the substrate pocket.

It belongs to the ketol-acid reductoisomerase family. Mg(2+) serves as cofactor.

It catalyses the reaction (2R)-2,3-dihydroxy-3-methylbutanoate + NADP(+) = (2S)-2-acetolactate + NADPH + H(+). The enzyme catalyses (2R,3R)-2,3-dihydroxy-3-methylpentanoate + NADP(+) = (S)-2-ethyl-2-hydroxy-3-oxobutanoate + NADPH + H(+). It functions in the pathway amino-acid biosynthesis; L-isoleucine biosynthesis; L-isoleucine from 2-oxobutanoate: step 2/4. It participates in amino-acid biosynthesis; L-valine biosynthesis; L-valine from pyruvate: step 2/4. Involved in the biosynthesis of branched-chain amino acids (BCAA). Catalyzes an alkyl-migration followed by a ketol-acid reduction of (S)-2-acetolactate (S2AL) to yield (R)-2,3-dihydroxy-isovalerate. In the isomerase reaction, S2AL is rearranged via a Mg-dependent methyl migration to produce 3-hydroxy-3-methyl-2-ketobutyrate (HMKB). In the reductase reaction, this 2-ketoacid undergoes a metal-dependent reduction by NADPH to yield (R)-2,3-dihydroxy-isovalerate. In Pseudarthrobacter chlorophenolicus (strain ATCC 700700 / DSM 12829 / CIP 107037 / JCM 12360 / KCTC 9906 / NCIMB 13794 / A6) (Arthrobacter chlorophenolicus), this protein is Ketol-acid reductoisomerase (NADP(+)).